A 304-amino-acid chain; its full sequence is Tritrans,polycis-undecaprenyl-diphosphate synthase (geranylgeranyl-diphosphate specific) (304 aa).

Asp33 is a catalytic residue. Asp33 provides a ligand contact to Mg(2+). Substrate-binding positions include 34-37 (GNRR), Lys46, His50, and 78-80 (STE). The active-site Proton acceptor is Asn81. Residues Phe82, Arg84, Arg203, and 209-211 (RTS) contribute to the substrate site.

This sequence belongs to the UPP synthase family. In terms of assembly, homodimer. Requires Mg(2+) as cofactor.

It carries out the reaction geranylgeranyl diphosphate + 7 isopentenyl diphosphate = tri-trans,hepta-cis-undecaprenyl diphosphate + 7 diphosphate. Functionally, catalyzes the sequential condensation of isopentenyl diphosphate (IPP) with geranylgeranyl diphosphate (GGPP) to yield (2Z,6Z,10Z,14Z,18Z,22Z,26Z,30E,34E,38E)-undecaprenyl diphosphate (tritrans,heptacis-UPP). It is probably the precursor of glycosyl carrier lipids. The polypeptide is Tritrans,polycis-undecaprenyl-diphosphate synthase (geranylgeranyl-diphosphate specific) (Haloarcula marismortui (strain ATCC 43049 / DSM 3752 / JCM 8966 / VKM B-1809) (Halobacterium marismortui)).